The following is a 608-amino-acid chain: Mitochondrial import receptor subunit TOM70 (608 aa).

Ala-2 carries the N-acetylalanine modification. Over 2-38 the chain is Mitochondrial intermembrane; the sequence is AASKPVEAAVVAAAVPSSGSGVGGGGTAGPGTGGLPR. The helical transmembrane segment at 39-59 threads the bilayer; that stretch reads WQLALAVGAPLLLGAGAIYLW. Residues 60–608 lie on the Cytoplasmic side of the membrane; the sequence is SRQQRRREAR…KKYGLKPPTL (549 aa). Residues 67 to 107 form a disordered region; sequence EARGRGDASGLKRNSERKTPEGRASPAPGSGHPEGPGAHLD. Residue Arg-71 is modified to Omega-N-methylarginine. 3 positions are modified to phosphoserine: Ser-91, Ser-96, and Ser-110. 2 TPR repeats span residues 114–147 and 153–186; these read AQAAKNKGNKYFKAGKYEQAIQCYTEAISLCPTE and STFYQNRAAAFEQLQKWKEVAQDCTKAVELNPKY. Residue Lys-185 is modified to N6-acetyllysine. Lys-275 participates in a covalent cross-link: Glycyl lysine isopeptide (Lys-Gly) (interchain with G-Cter in SUMO2). TPR repeat units follow at residues 294–327, 329–362, 367–400, 401–434, 440–475, 476–509, 511–544, and 545–578; these read ENSGYLKAKQYMEEENYDKIISECSKEIDAEGKY, AEALLLRATFYLLIGNANAAKPDLDKVISLKEAN, ANALIKRGSMYMQQQQPLLSTQDFNMAADIDPQN, ADVYHHRGQLKILLDQVEEAVADFDECIRLRPES, QKCFALYRQAYTGNNSSQIQAAMKGFEEVIKKFPRC, AEGYALYAQALTDQQQFGKADEMYDKCIDLEPDN, TTYVHKGLLQLQWKQDLDRGLELISKAIEIDNKC, and DFAYETMGTIEVQRGNMEKAIDMFNKAINLAKSE. Position 434 is a phosphoserine (Ser-434).

Belongs to the Tom70 family. Forms part of the preprotein translocase complex of the outer mitochondrial membrane (TOM complex) which consists of at least 7 different proteins (TOMM5, TOMM6, TOMM7, TOMM20, TOMM22, TOMM40 and TOMM70). Interacts with CAPN8. Interacts with TRADD, TRAF6 and STING. Interacts with MAVS; the interaction is enhanced by Sendai virus infection. Interacts with HSPA8 and HSP90AA1; both interactions are required for preprotein mitochondrial import. The interaction with HSP90AA1 is direct and mediates the association of TOMM70 with IRF3 and TBK1. Upon mitochondrial depolarization, interacts with PINK1; the interaction is required for PINK1-TOM-TIM23 supercomplex formation which is critical for PINK1 stabilization at the outer mitochondrial membrane, kinase activation and downstream mitophagy. As to quaternary structure, (Microbial infection) Interacts (via C-terminus) with SARS coronaviru/SARS-CoV and SARS coronavirus-2/SARS-CoV-2 virus protein ORF9b. In terms of assembly, (Microbial infection) Interacts with parasite T.gondii RH strain MAF1b1; the interaction impairs TOMM70 import activity, enables the parasite to associate with the host mitochondria and facilitates the association of MAF1b1 with MIB complex component SAMM50, promoting the formation of SPOTs (structures positive for outer mitochondrial membrane (OMM)); the interaction is probably indirect.

The protein resides in the mitochondrion outer membrane. In terms of biological role, acts as a receptor of the preprotein translocase complex of the outer mitochondrial membrane (TOM complex). Recognizes and mediates the translocation of mitochondrial preproteins from the cytosol into the mitochondria in a chaperone dependent manner. Mediates TBK1 and IRF3 activation induced by MAVS in response to Sendai virus infection and promotes host antiviral responses during virus infection. Upon Sendai virus infection, recruits HSP90AA1:IRF3:BAX in mitochondrion and the complex induces apoptosis. In Homo sapiens (Human), this protein is Mitochondrial import receptor subunit TOM70.